The sequence spans 386 residues: GTPase Obg (386 aa).

In terms of domain architecture, Obg spans 4–162 (SNFVDYVKIY…RTVILQLKLL (159 aa)). The interval 18–44 (KGGRGSSHFRREKYIPKGGPDGGDGGR) is disordered. One can recognise an OBG-type G domain in the interval 163 to 329 (ADVGLVGFPN…LKDLLWKELN (167 aa)). GTP is bound by residues 169 to 176 (GFPNAGKS), 194 to 198 (FTTLE), 216 to 219 (DIPG), 283 to 286 (TKSD), and 310 to 312 (SSI). Residues serine 176 and threonine 196 each coordinate Mg(2+). Residues 357–386 (YIFPVDEDEDDPDEEYEEYWDDDEDEDTRK) are disordered.

The protein belongs to the TRAFAC class OBG-HflX-like GTPase superfamily. OBG GTPase family. Monomer. Mg(2+) is required as a cofactor.

The protein resides in the cytoplasm. In terms of biological role, an essential GTPase which binds GTP, GDP and possibly (p)ppGpp with moderate affinity, with high nucleotide exchange rates and a fairly low GTP hydrolysis rate. Plays a role in control of the cell cycle, stress response, ribosome biogenesis and in those bacteria that undergo differentiation, in morphogenesis control. The chain is GTPase Obg from Parabacteroides distasonis (strain ATCC 8503 / DSM 20701 / CIP 104284 / JCM 5825 / NCTC 11152).